The primary structure comprises 314 residues: MTQTLPAGLTATAMVAASSANLGPGFDSLGLALSLYDEIVVETVDSGLTVTVEGEGAGQVALDSSHLVVRAIEAGLRATGCVAPGLVVRCRNDIPHSRGLGSSAAAVVGGLAAANGLVSQTDWTPLTVEQLIQLSSAFEGHPDNAAAAVLGGAVVTWTDGAGAQARYAAAPLRVHPDIHLFPAIPQQRSSTAETRVLLPDTVSHTDARFNLSRAALLVVALTERPDLLMAATEDVLHQPQRAAAMPASAEFLRVLRGCGVAAVLSGAGPAVIALSTEPELPAEAVEFGIANGFTIAEMAVGDGVRWSTGVAAGR.

95–105 (PHSRGLGSSAA) contributes to the ATP binding site.

Belongs to the GHMP kinase family. Homoserine kinase subfamily.

It localises to the cytoplasm. The enzyme catalyses L-homoserine + ATP = O-phospho-L-homoserine + ADP + H(+). It participates in amino-acid biosynthesis; L-threonine biosynthesis; L-threonine from L-aspartate: step 4/5. In terms of biological role, catalyzes the ATP-dependent phosphorylation of L-homoserine to L-homoserine phosphate. This is Homoserine kinase from Mycobacterium sp. (strain JLS).